The following is a 361-amino-acid chain: Phospho-N-acetylmuramoyl-pentapeptide-transferase (361 aa).

The next 10 helical transmembrane spans lie at 17-37, 66-86, 90-110, 129-149, 162-182, 197-217, 232-252, 261-281, 286-306, and 340-360; these read SIYL…LFAG, GTPT…SIFI, TNSL…IGFI, LLFQ…IGLT, ISAY…QIVL, GLAI…AYFT, VGSG…LGFL, IFMG…IAII, LMLP…ILQV, and FWIG…MRGI.

The protein belongs to the glycosyltransferase 4 family. MraY subfamily. Mg(2+) serves as cofactor.

It is found in the cell inner membrane. It catalyses the reaction UDP-N-acetyl-alpha-D-muramoyl-L-alanyl-gamma-D-glutamyl-meso-2,6-diaminopimeloyl-D-alanyl-D-alanine + di-trans,octa-cis-undecaprenyl phosphate = di-trans,octa-cis-undecaprenyl diphospho-N-acetyl-alpha-D-muramoyl-L-alanyl-D-glutamyl-meso-2,6-diaminopimeloyl-D-alanyl-D-alanine + UMP. The protein operates within cell wall biogenesis; peptidoglycan biosynthesis. Functionally, catalyzes the initial step of the lipid cycle reactions in the biosynthesis of the cell wall peptidoglycan: transfers peptidoglycan precursor phospho-MurNAc-pentapeptide from UDP-MurNAc-pentapeptide onto the lipid carrier undecaprenyl phosphate, yielding undecaprenyl-pyrophosphoryl-MurNAc-pentapeptide, known as lipid I. The polypeptide is Phospho-N-acetylmuramoyl-pentapeptide-transferase (Fusobacterium nucleatum subsp. nucleatum (strain ATCC 25586 / DSM 15643 / BCRC 10681 / CIP 101130 / JCM 8532 / KCTC 2640 / LMG 13131 / VPI 4355)).